A 211-amino-acid polypeptide reads, in one-letter code: ATP-dependent Clp protease proteolytic subunit (211 aa).

Ser106 acts as the Nucleophile in catalysis. His131 is a catalytic residue.

This sequence belongs to the peptidase S14 family. In terms of assembly, fourteen ClpP subunits assemble into 2 heptameric rings which stack back to back to give a disk-like structure with a central cavity, resembling the structure of eukaryotic proteasomes.

It localises to the cytoplasm. It catalyses the reaction Hydrolysis of proteins to small peptides in the presence of ATP and magnesium. alpha-casein is the usual test substrate. In the absence of ATP, only oligopeptides shorter than five residues are hydrolyzed (such as succinyl-Leu-Tyr-|-NHMec, and Leu-Tyr-Leu-|-Tyr-Trp, in which cleavage of the -Tyr-|-Leu- and -Tyr-|-Trp bonds also occurs).. Its function is as follows. Cleaves peptides in various proteins in a process that requires ATP hydrolysis. Has a chymotrypsin-like activity. Plays a major role in the degradation of misfolded proteins. In Nitrobacter hamburgensis (strain DSM 10229 / NCIMB 13809 / X14), this protein is ATP-dependent Clp protease proteolytic subunit.